We begin with the raw amino-acid sequence, 373 residues long: MPKRFLAPVTEQIYTLNLGPQHPSTHGVLRVLLDLDGEFIVKADPVIGYGHRGHEKMGENRLFKQFLPNTSRLDYLSGFLFNHGYVLAVEKLAGIPVPPRAQFIRTICSEFNRIASHLLWFGTYVMDLGGFTPFLYAFDDRERILDILDWVTGSRLTYSYCRFGGVDRDIDTRFTDMARDFIKRLRSRWPDYHNLVTRNIIFIHRTRGVGVITPEQARQFGVTGPNLRACGIAFDTRKAEPYEVYDQFDFEIPVGSDGDALDRYRVRFEEMEQSLRIIEQALDRLPGGPFMNDSVPTRLKPPKGEVYFAFESARGQAAYYLVSDGTPSPYRCHIRVPSFGNLHVLTEVLRGTLVADAISILGSVDLVIPEIDR.

The protein belongs to the complex I 49 kDa subunit family. NDH-1 is composed of 14 different subunits. Subunits NuoB, C, D, E, F, and G constitute the peripheral sector of the complex.

Its subcellular location is the cell inner membrane. It carries out the reaction a quinone + NADH + 5 H(+)(in) = a quinol + NAD(+) + 4 H(+)(out). Its function is as follows. NDH-1 shuttles electrons from NADH, via FMN and iron-sulfur (Fe-S) centers, to quinones in the respiratory chain. The immediate electron acceptor for the enzyme in this species is believed to be ubiquinone. Couples the redox reaction to proton translocation (for every two electrons transferred, four hydrogen ions are translocated across the cytoplasmic membrane), and thus conserves the redox energy in a proton gradient. The protein is NADH-quinone oxidoreductase subunit D of Syntrophobacter fumaroxidans (strain DSM 10017 / MPOB).